The chain runs to 284 residues: 4-hydroxy-3-methylbut-2-enyl diphosphate reductase (284 aa).

Cys-12 is a [4Fe-4S] cluster binding site. The (2E)-4-hydroxy-3-methylbut-2-enyl diphosphate site is built by His-40 and His-76. The dimethylallyl diphosphate site is built by His-40 and His-76. The isopentenyl diphosphate site is built by His-40 and His-76. Cys-98 is a binding site for [4Fe-4S] cluster. His-126 contributes to the (2E)-4-hydroxy-3-methylbut-2-enyl diphosphate binding site. His-126 is a dimethylallyl diphosphate binding site. An isopentenyl diphosphate-binding site is contributed by His-126. The active-site Proton donor is Glu-128. (2E)-4-hydroxy-3-methylbut-2-enyl diphosphate is bound at residue Thr-161. Cys-191 is a [4Fe-4S] cluster binding site. Residues Ser-219, Ser-220, Asn-221, and Ser-263 each contribute to the (2E)-4-hydroxy-3-methylbut-2-enyl diphosphate site. Dimethylallyl diphosphate-binding residues include Ser-219, Ser-220, Asn-221, and Ser-263. Isopentenyl diphosphate-binding residues include Ser-219, Ser-220, Asn-221, and Ser-263.

This sequence belongs to the IspH family. [4Fe-4S] cluster serves as cofactor.

The catalysed reaction is isopentenyl diphosphate + 2 oxidized [2Fe-2S]-[ferredoxin] + H2O = (2E)-4-hydroxy-3-methylbut-2-enyl diphosphate + 2 reduced [2Fe-2S]-[ferredoxin] + 2 H(+). The enzyme catalyses dimethylallyl diphosphate + 2 oxidized [2Fe-2S]-[ferredoxin] + H2O = (2E)-4-hydroxy-3-methylbut-2-enyl diphosphate + 2 reduced [2Fe-2S]-[ferredoxin] + 2 H(+). It participates in isoprenoid biosynthesis; dimethylallyl diphosphate biosynthesis; dimethylallyl diphosphate from (2E)-4-hydroxy-3-methylbutenyl diphosphate: step 1/1. It functions in the pathway isoprenoid biosynthesis; isopentenyl diphosphate biosynthesis via DXP pathway; isopentenyl diphosphate from 1-deoxy-D-xylulose 5-phosphate: step 6/6. Catalyzes the conversion of 1-hydroxy-2-methyl-2-(E)-butenyl 4-diphosphate (HMBPP) into a mixture of isopentenyl diphosphate (IPP) and dimethylallyl diphosphate (DMAPP). Acts in the terminal step of the DOXP/MEP pathway for isoprenoid precursor biosynthesis. The chain is 4-hydroxy-3-methylbut-2-enyl diphosphate reductase from Petrotoga mobilis (strain DSM 10674 / SJ95).